A 624-amino-acid polypeptide reads, in one-letter code: Adenine deaminase 1 (624 aa).

This sequence belongs to the metallo-dependent hydrolases superfamily. Adenine deaminase family. Mn(2+) serves as cofactor.

It carries out the reaction adenine + H2O + H(+) = hypoxanthine + NH4(+). This is Adenine deaminase 1 from Bradyrhizobium sp. (strain ORS 278).